Here is a 534-residue protein sequence, read N- to C-terminus: Blue-light-activated protein (534 aa).

One can recognise a PAS domain in the interval 20 to 93 (GKDIFFAAVE…QSIRDAIAQR (74 aa)). An S-4a-FMN cysteine modification is found at Cys-70. A PAC domain is found at 94 to 148 (NDISAEIINYRKDGSSFWNALFISPVYNDAGDLIYFFASQLDISRRKDAEEALRQ). Positions 161–390 (GIAHDFNNLL…TLRLYFPVDE (230 aa)) constitute a Histidine kinase domain. His-164 is modified (phosphohistidine; by autocatalysis). The Response regulatory domain occupies 411 to 527 (RILIVEDRPD…DLARKVRQVL (117 aa)). Asp-461 bears the 4-aspartylphosphate mark.

Post-translationally, FMN binds covalently to cysteine after exposure to blue light and this bond is spontaneously broken in the dark.

The enzyme catalyses ATP + protein L-histidine = ADP + protein N-phospho-L-histidine.. Functionally, photosensitive kinase and response regulator that is involved in increased bacterial virulence upon exposure to light. In Pseudomonas syringae pv. tomato (strain ATCC BAA-871 / DC3000), this protein is Blue-light-activated protein.